The sequence spans 303 residues: Acetylglutamate kinase (303 aa).

Residues 69–70 (GG), Arg-91, and Asn-190 contribute to the substrate site.

This sequence belongs to the acetylglutamate kinase family. ArgB subfamily.

The protein resides in the cytoplasm. It catalyses the reaction N-acetyl-L-glutamate + ATP = N-acetyl-L-glutamyl 5-phosphate + ADP. It functions in the pathway amino-acid biosynthesis; L-arginine biosynthesis; N(2)-acetyl-L-ornithine from L-glutamate: step 2/4. Functionally, catalyzes the ATP-dependent phosphorylation of N-acetyl-L-glutamate. In Nocardia farcinica (strain IFM 10152), this protein is Acetylglutamate kinase.